Reading from the N-terminus, the 1687-residue chain is Vitellogenin-2 (1687 aa).

The N-terminal stretch at 1–15 is a signal peptide; that stretch reads MRVLVLALTVALVAG. The region spanning 24–663 is the Vitellogenin domain; that stretch reads FAPGKTYEYK…DAATVLPKNI (640 aa). N-linked (GlcNAc...) asparagine glycans are attached at residues Asn-941, Asn-945, Asn-954, Asn-1004, Asn-1019, and Asn-1083. The tract at residues 1081–1174 is disordered; the sequence is LKNSTKASSS…SSSSSKTKWQ (94 aa). Low complexity predominate over residues 1088-1127; that stretch reads SSSSSGSSRSSRSRSSSSSSSSSSSSSSRSSSSSSRSSSS. Asn-1142 carries an N-linked (GlcNAc...) asparagine glycan. The span at 1148–1169 shows a compositional bias: low complexity; sequence SSSSSSSSSSSSSSSSSSSSSS. Asn-1179, Asn-1257, Asn-1292, Asn-1342, Asn-1361, Asn-1366, and Asn-1390 each carry an N-linked (GlcNAc...) asparagine glycan. Residues 1417 to 1593 form the VWFD domain; it reads AECTVVEDTV…SWVLPAKSCR (177 aa). 2 disulfide bridges follow: Cys-1419/Cys-1556 and Cys-1442/Cys-1592. N-linked (GlcNAc...) asparagine glycans are attached at residues Asn-1577 and Asn-1655.

Post-translationally, phosvitin, an egg yolk storage protein, is one of the most highly phosphorylated (10%) proteins in nature. As to expression, produced by the liver, secreted into the blood and then sequestered by receptor mediated endocytosis into growing oocytes, where it is generally cleaved, giving rise to the respective yolk components lipovitellins and phosvitin.

In terms of biological role, precursor of the egg-yolk proteins that are sources of nutrients during early development of oviparous organisms. This Fundulus heteroclitus (Killifish) protein is Vitellogenin-2.